The following is a 1378-amino-acid chain: Roundabout homolog 2 (1378 aa).

The N-terminal stretch at 1–21 (MSLLMFTQLLLCGFLYVRVDG) is a signal peptide. The Extracellular portion of the chain corresponds to 22–859 (SRLRQEDFPP…EQITDVVKQP (838 aa)). Ig-like C2-type domains lie at 31–127 (PRIV…ASLE), 133–220 (DDFR…AELT), 225–309 (PTFL…ATLT), 314–409 (PQFV…LEVT), and 418–504 (PIIL…AVLD). A disulfide bridge connects residues Cys52 and Cys110. Asn123 carries an N-linked (GlcNAc...) asparagine glycan. Cystine bridges form between Cys154–Cys203, Cys246–Cys293, and Cys335–Cys391. A glycan (N-linked (GlcNAc...) asparagine) is linked at Asn426. An intrachain disulfide couples Cys439 to Cys488. Fibronectin type-III domains are found at residues 524–618 (PPSK…TQDI), 637–735 (VLVR…TEEA), and 739–836 (PPQS…IGRR). Residues 603–625 (LSDPSPMSDPVRTQDISPPAQGV) form a disordered region. N-linked (GlcNAc...) asparagine glycans are attached at residues Asn752, Asn782, Asn789, and Asn845. A helical transmembrane segment spans residues 860–880 (AFIAGIGGACWVILMGFSIWL). Residues 881–1378 (YWRRKKRKGL…NSQGQFTGEL (498 aa)) lie on the Cytoplasmic side of the membrane. Disordered regions lie at residues 1032 to 1084 (GFGY…PLPG), 1124 to 1156 (EDDD…LTPS), and 1215 to 1348 (DVAD…KTEV). Residues 1058–1067 (SSKPQKNNGS) show a composition bias toward low complexity. Positions 1141–1155 (PAISFGQQSTATLTP) are enriched in polar residues. Thr1154 is subject to Phosphothreonine. Ser1156 is subject to Phosphoserine. Over residues 1215–1228 (DVADDDADDEEEAL) the composition is skewed to acidic residues. A compositionally biased stretch (polar residues) spans 1240-1285 (TPGSSMDNLDSSVTGKAFTSSQRPRPTSPFSTDSNTSAALSQSQRP). Over residues 1319–1343 (SKPSFPSPGGHSSSGTASSKGSTGP) the composition is skewed to low complexity.

Belongs to the immunoglobulin superfamily. ROBO family. In terms of assembly, interacts with SLIT2.

It localises to the membrane. In terms of biological role, receptor for SLIT2, and probably SLIT1, which are thought to act as molecular guidance cue in cellular migration, including axonal navigation at the ventral midline of the neural tube and projection of axons to different regions during neuronal development. The sequence is that of Roundabout homolog 2 (ROBO2) from Homo sapiens (Human).